The primary structure comprises 952 residues: Leucine--tRNA ligase (952 aa).

A 'HIGH' region motif is present at residues 66-77; sequence PYPSGAGLHVGH. The 'KMSKS' region signature appears at 722 to 726; the sequence is KMGKS. ATP is bound at residue Lys-725.

This sequence belongs to the class-I aminoacyl-tRNA synthetase family.

Its subcellular location is the cytoplasm. The catalysed reaction is tRNA(Leu) + L-leucine + ATP = L-leucyl-tRNA(Leu) + AMP + diphosphate. This is Leucine--tRNA ligase from Corynebacterium glutamicum (strain R).